Reading from the N-terminus, the 161-residue chain is ATP synthase subunit b (161 aa).

Residues 2–22 (VIEWGTALYQLLAFAVLLLIL) traverse the membrane as a helical segment.

This sequence belongs to the ATPase B chain family. In terms of assembly, F-type ATPases have 2 components, F(1) - the catalytic core - and F(0) - the membrane proton channel. F(1) has five subunits: alpha(3), beta(3), gamma(1), delta(1), epsilon(1). F(0) has three main subunits: a(1), b(2) and c(10-14). The alpha and beta chains form an alternating ring which encloses part of the gamma chain. F(1) is attached to F(0) by a central stalk formed by the gamma and epsilon chains, while a peripheral stalk is formed by the delta and b chains.

It is found in the cell membrane. In terms of biological role, f(1)F(0) ATP synthase produces ATP from ADP in the presence of a proton or sodium gradient. F-type ATPases consist of two structural domains, F(1) containing the extramembraneous catalytic core and F(0) containing the membrane proton channel, linked together by a central stalk and a peripheral stalk. During catalysis, ATP synthesis in the catalytic domain of F(1) is coupled via a rotary mechanism of the central stalk subunits to proton translocation. Functionally, component of the F(0) channel, it forms part of the peripheral stalk, linking F(1) to F(0). The polypeptide is ATP synthase subunit b (Shouchella clausii (strain KSM-K16) (Alkalihalobacillus clausii)).